The chain runs to 323 residues: Beta-ketoacyl-[acyl-carrier-protein] synthase III (323 aa).

Catalysis depends on residues cysteine 112 and histidine 249. The segment at 250 to 254 is ACP-binding; that stretch reads QANYR. Asparagine 279 is a catalytic residue.

It belongs to the thiolase-like superfamily. FabH family. Homodimer.

The protein resides in the cytoplasm. It carries out the reaction malonyl-[ACP] + acetyl-CoA + H(+) = 3-oxobutanoyl-[ACP] + CO2 + CoA. It participates in lipid metabolism; fatty acid biosynthesis. Functionally, catalyzes the condensation reaction of fatty acid synthesis by the addition to an acyl acceptor of two carbons from malonyl-ACP. Catalyzes the first condensation reaction which initiates fatty acid synthesis and may therefore play a role in governing the total rate of fatty acid production. Possesses both acetoacetyl-ACP synthase and acetyl transacylase activities. Its substrate specificity determines the biosynthesis of branched-chain and/or straight-chain of fatty acids. The protein is Beta-ketoacyl-[acyl-carrier-protein] synthase III of Clostridium kluyveri (strain NBRC 12016).